The following is a 456-amino-acid chain: Bifunctional protein GlmU (456 aa).

The interval methionine 1–arginine 229 is pyrophosphorylase. UDP-N-acetyl-alpha-D-glucosamine is bound by residues leucine 11 to glycine 14, lysine 25, glutamine 76, glycine 81 to threonine 82, tyrosine 103 to aspartate 105, glycine 140, glutamate 154, asparagine 169, and asparagine 227. Aspartate 105 serves as a coordination point for Mg(2+). Asparagine 227 is a binding site for Mg(2+). The segment at leucine 230 to alanine 250 is linker. An N-acetyltransferase region spans residues glycine 251–lysine 456. Residues arginine 333 and lysine 351 each contribute to the UDP-N-acetyl-alpha-D-glucosamine site. Residue histidine 363 is the Proton acceptor of the active site. Tyrosine 366 and asparagine 377 together coordinate UDP-N-acetyl-alpha-D-glucosamine. Residues alanine 380, asparagine 386–tyrosine 387, serine 405, alanine 423, and arginine 440 each bind acetyl-CoA.

The protein in the N-terminal section; belongs to the N-acetylglucosamine-1-phosphate uridyltransferase family. It in the C-terminal section; belongs to the transferase hexapeptide repeat family. As to quaternary structure, homotrimer. Mg(2+) serves as cofactor.

It localises to the cytoplasm. The enzyme catalyses alpha-D-glucosamine 1-phosphate + acetyl-CoA = N-acetyl-alpha-D-glucosamine 1-phosphate + CoA + H(+). The catalysed reaction is N-acetyl-alpha-D-glucosamine 1-phosphate + UTP + H(+) = UDP-N-acetyl-alpha-D-glucosamine + diphosphate. Its pathway is nucleotide-sugar biosynthesis; UDP-N-acetyl-alpha-D-glucosamine biosynthesis; N-acetyl-alpha-D-glucosamine 1-phosphate from alpha-D-glucosamine 6-phosphate (route II): step 2/2. It participates in nucleotide-sugar biosynthesis; UDP-N-acetyl-alpha-D-glucosamine biosynthesis; UDP-N-acetyl-alpha-D-glucosamine from N-acetyl-alpha-D-glucosamine 1-phosphate: step 1/1. It functions in the pathway bacterial outer membrane biogenesis; LPS lipid A biosynthesis. Its function is as follows. Catalyzes the last two sequential reactions in the de novo biosynthetic pathway for UDP-N-acetylglucosamine (UDP-GlcNAc). The C-terminal domain catalyzes the transfer of acetyl group from acetyl coenzyme A to glucosamine-1-phosphate (GlcN-1-P) to produce N-acetylglucosamine-1-phosphate (GlcNAc-1-P), which is converted into UDP-GlcNAc by the transfer of uridine 5-monophosphate (from uridine 5-triphosphate), a reaction catalyzed by the N-terminal domain. The chain is Bifunctional protein GlmU from Escherichia coli O45:K1 (strain S88 / ExPEC).